Reading from the N-terminus, the 442-residue chain is Trigger factor (442 aa).

A PPIase FKBP-type domain is found at 163–248 (GDQVVIDFLG…IKEVKAPKAA (86 aa)).

It belongs to the FKBP-type PPIase family. Tig subfamily.

Its subcellular location is the cytoplasm. The catalysed reaction is [protein]-peptidylproline (omega=180) = [protein]-peptidylproline (omega=0). Its function is as follows. Involved in protein export. Acts as a chaperone by maintaining the newly synthesized protein in an open conformation. Functions as a peptidyl-prolyl cis-trans isomerase. This is Trigger factor from Dinoroseobacter shibae (strain DSM 16493 / NCIMB 14021 / DFL 12).